The chain runs to 489 residues: Ribulose-1,5 bisphosphate carboxylase/oxygenase large subunit N-methyltransferase, chloroplastic (489 aa).

A chloroplast-targeting transit peptide spans 1–37; it reads MATIFSGGSVSPFLFHTNKGTSFTPKAPILHLKRSFS. The SET domain occupies 64 to 288; the sequence is EGVITAKTPV…AGEQVYIQYD (225 aa). S-adenosyl-L-methionine is bound by residues 80–82 and R222; that span reads EGL. Residues R222, R226, and D239 each contribute to the substrate site. 242-243 is an S-adenosyl-L-methionine binding site; the sequence is NH. The substrate site is built by Y254, Y287, and Y300.

The protein belongs to the class V-like SAM-binding methyltransferase superfamily. Plant protein-lysine LSMT methyltransferase family. As to quaternary structure, homotrimer. Highly expressed in leaf.

Its subcellular location is the plastid. It localises to the chloroplast. It carries out the reaction L-lysyl-[ribulose-1,5-bisphosphate carboxylase] + 3 S-adenosyl-L-methionine = N(6),N(6),N(6)-trimethyl-L-lysyl-[ribulose-1,5-bisphosphate carboxylase] + 3 S-adenosyl-L-homocysteine + 3 H(+). It catalyses the reaction [fructose-bisphosphate aldolase]-L-lysine + 3 S-adenosyl-L-methionine = [fructose-bisphosphate aldolase]-N(6),N(6),N(6)-trimethyl-L-lysine + 3 S-adenosyl-L-homocysteine + 3 H(+). In terms of biological role, methylates 'Lys-14' of the large subunit of RuBisCO. Can also use with lower efficiency chloroplastic fructose-bisphosphate aldolases and gamma-tocopherol methyltransferase as substrates, but not a cytosolic aldolase. The chain is Ribulose-1,5 bisphosphate carboxylase/oxygenase large subunit N-methyltransferase, chloroplastic (RBCMT) from Pisum sativum (Garden pea).